A 329-amino-acid polypeptide reads, in one-letter code: Ig gamma-2C chain C region (329 aa).

Residues 1–97 (ARTTAPSVYP…ATKSNLIKRI (97 aa)) are CH1. Cys27 and Cys82 are joined by a disulfide. The interval 98-113 (EPRRPKPRPPTDICSC) is hinge. A CH2 region spans residues 114 to 222 (DDNLGRPSVF…PIEKTISKPR (109 aa)). 2 cysteine pairs are disulfide-bonded: Cys143–Cys203 and Cys249–Cys307. Positions 223-329 (GKARTPQVYT…QKNLSRSPGK (107 aa)) are CH3.

The protein is Ig gamma-2C chain C region of Rattus norvegicus (Rat).